A 574-amino-acid polypeptide reads, in one-letter code: Amino-acid acetyltransferase, mitochondrial (574 aa).

A mitochondrion-targeting transit peptide spans 1–13 (MWRRIFAHELKYD). In terms of domain architecture, N-acetyltransferase spans 392 to 560 (KGAKPSSNSP…KRLREFMRSV (169 aa)).

Belongs to the acetyltransferase family. As to quaternary structure, interacts with the acetylglutamate kinase chain of AGR5,6.

The protein resides in the mitochondrion. It catalyses the reaction L-glutamate + acetyl-CoA = N-acetyl-L-glutamate + CoA + H(+). It participates in amino-acid biosynthesis; L-arginine biosynthesis; N(2)-acetyl-L-ornithine from L-glutamate: step 1/4. Feedback inhibition by L-arginine. In terms of biological role, N-acetylglutamate synthase involved in arginine biosynthesis. The chain is Amino-acid acetyltransferase, mitochondrial (ARG2) from Saccharomyces cerevisiae (strain RM11-1a) (Baker's yeast).